Here is a 286-residue protein sequence, read N- to C-terminus: Ribosomal RNA small subunit methyltransferase H (286 aa).

Residues 17–19 (AGH), Asp36, Phe63, Asp84, and Gln91 each bind S-adenosyl-L-methionine.

This sequence belongs to the methyltransferase superfamily. RsmH family.

Its subcellular location is the cytoplasm. The catalysed reaction is cytidine(1402) in 16S rRNA + S-adenosyl-L-methionine = N(4)-methylcytidine(1402) in 16S rRNA + S-adenosyl-L-homocysteine + H(+). Specifically methylates the N4 position of cytidine in position 1402 (C1402) of 16S rRNA. The polypeptide is Ribosomal RNA small subunit methyltransferase H (Metamycoplasma arthritidis (strain 158L3-1) (Mycoplasma arthritidis)).